We begin with the raw amino-acid sequence, 570 residues long: Methionine--tRNA ligase (570 aa).

Residues 11-21 (PYVQTVPHLGN) carry the 'HIGH' region motif. 4 residues coordinate Zn(2+): Cys143, Cys146, Cys156, and Cys159. Residues 333 to 337 (KFSKS) carry the 'KMSKS' region motif. Position 336 (Lys336) interacts with ATP.

This sequence belongs to the class-I aminoacyl-tRNA synthetase family. MetG type 1 subfamily. Zn(2+) serves as cofactor.

It localises to the cytoplasm. The catalysed reaction is tRNA(Met) + L-methionine + ATP = L-methionyl-tRNA(Met) + AMP + diphosphate. In terms of biological role, is required not only for elongation of protein synthesis but also for the initiation of all mRNA translation through initiator tRNA(fMet) aminoacylation. The protein is Methionine--tRNA ligase of Pyrobaculum arsenaticum (strain DSM 13514 / JCM 11321 / PZ6).